The chain runs to 176 residues: 3-hydroxyanthranilate 3,4-dioxygenase (176 aa).

R44 lines the O2 pocket. Fe cation contacts are provided by H48, E54, and H92. E54 is a substrate binding site. 2 residues coordinate substrate: R96 and E106. Positions 121, 124, 158, and 161 each coordinate Fe cation.

It belongs to the 3-HAO family. As to quaternary structure, homodimer. Fe(2+) is required as a cofactor.

The enzyme catalyses 3-hydroxyanthranilate + O2 = (2Z,4Z)-2-amino-3-carboxymuconate 6-semialdehyde. It functions in the pathway cofactor biosynthesis; NAD(+) biosynthesis; quinolinate from L-kynurenine: step 3/3. Its function is as follows. Catalyzes the oxidative ring opening of 3-hydroxyanthranilate to 2-amino-3-carboxymuconate semialdehyde, which spontaneously cyclizes to quinolinate. This Xanthomonas oryzae pv. oryzae (strain MAFF 311018) protein is 3-hydroxyanthranilate 3,4-dioxygenase.